The chain runs to 446 residues: Tubulin alpha chain-like 3 (446 aa).

The short motif at 1–4 is the MREC motif element; the sequence is MREC. 8 residues coordinate GTP: Q11, E78, S147, G151, T152, T186, N213, and N235. Position 78 (E78) interacts with Mg(2+). Residue E261 is part of the active site.

It belongs to the tubulin family. Dimer of alpha and beta chains. A typical microtubule is a hollow water-filled tube with an outer diameter of 25 nm and an inner diameter of 15 nM. Alpha-beta heterodimers associate head-to-tail to form protofilaments running lengthwise along the microtubule wall with the beta-tubulin subunit facing the microtubule plus end conferring a structural polarity. Microtubules usually have 13 protofilaments but different protofilament numbers can be found in some organisms and specialized cells. It depends on Mg(2+) as a cofactor. Some glutamate residues at the C-terminus are polyglycylated, resulting in polyglycine chains on the gamma-carboxyl group. Glycylation is mainly limited to tubulin incorporated into axonemes (cilia and flagella) whereas glutamylation is prevalent in neuronal cells, centrioles, axonemes, and the mitotic spindle. Both modifications can coexist on the same protein on adjacent residues, and lowering polyglycylation levels increases polyglutamylation, and reciprocally. Cilia and flagella glycylation is required for their stability and maintenance. Flagella glycylation controls sperm motility. In terms of processing, some glutamate residues at the C-terminus are polyglutamylated, resulting in polyglutamate chains on the gamma-carboxyl group. Polyglutamylation plays a key role in microtubule severing by spastin (SPAST). SPAST preferentially recognizes and acts on microtubules decorated with short polyglutamate tails: severing activity by SPAST increases as the number of glutamates per tubulin rises from one to eight, but decreases beyond this glutamylation threshold. Glutamylation is also involved in cilia motility.

The protein localises to the cytoplasm. It localises to the cytoskeleton. The enzyme catalyses GTP + H2O = GDP + phosphate + H(+). Functionally, tubulin is the major constituent of microtubules, a cylinder consisting of laterally associated linear protofilaments composed of alpha- and beta-tubulin heterodimers. Microtubules grow by the addition of GTP-tubulin dimers to the microtubule end, where a stabilizing cap forms. Below the cap, tubulin dimers are in GDP-bound state, owing to GTPase activity of alpha-tubulin. The sequence is that of Tubulin alpha chain-like 3 (Tubal3) from Mus musculus (Mouse).